The following is a 303-amino-acid chain: Sulfate adenylyltransferase subunit 2 (303 aa).

This sequence belongs to the PAPS reductase family. CysD subfamily. As to quaternary structure, heterodimer composed of CysD, the smaller subunit, and CysN.

It carries out the reaction sulfate + ATP + H(+) = adenosine 5'-phosphosulfate + diphosphate. It participates in sulfur metabolism; hydrogen sulfide biosynthesis; sulfite from sulfate: step 1/3. In terms of biological role, with CysN forms the ATP sulfurylase (ATPS) that catalyzes the adenylation of sulfate producing adenosine 5'-phosphosulfate (APS) and diphosphate, the first enzymatic step in sulfur assimilation pathway. APS synthesis involves the formation of a high-energy phosphoric-sulfuric acid anhydride bond driven by GTP hydrolysis by CysN coupled to ATP hydrolysis by CysD. This is Sulfate adenylyltransferase subunit 2 from Bacteroides fragilis (strain YCH46).